The following is a 456-amino-acid chain: Bifunctional protein GlmU (456 aa).

The interval 1–229 (MLNNAMSVVI…LSEVEGVNNR (229 aa)) is pyrophosphorylase. Residues 11-14 (LAAG), Lys-25, Gln-76, 81-82 (GT), 103-105 (YGD), Gly-140, Glu-154, Asn-169, and Asn-227 each bind UDP-N-acetyl-alpha-D-glucosamine. Asp-105 is a binding site for Mg(2+). Asn-227 contributes to the Mg(2+) binding site. Positions 230–250 (LQLSRLERVYQSEQAEKLLLA) are linker. The interval 251–456 (GVMLRDPARF…EGWRRPVKKK (206 aa)) is N-acetyltransferase. 2 residues coordinate UDP-N-acetyl-alpha-D-glucosamine: Arg-333 and Lys-351. Residue His-363 is the Proton acceptor of the active site. Residues Tyr-366 and Asn-377 each coordinate UDP-N-acetyl-alpha-D-glucosamine. Acetyl-CoA is bound by residues Ala-380, 386-387 (NY), Ser-405, Ala-423, and Arg-440.

The protein in the N-terminal section; belongs to the N-acetylglucosamine-1-phosphate uridyltransferase family. In the C-terminal section; belongs to the transferase hexapeptide repeat family. As to quaternary structure, homotrimer. The cofactor is Mg(2+).

Its subcellular location is the cytoplasm. The catalysed reaction is alpha-D-glucosamine 1-phosphate + acetyl-CoA = N-acetyl-alpha-D-glucosamine 1-phosphate + CoA + H(+). It carries out the reaction N-acetyl-alpha-D-glucosamine 1-phosphate + UTP + H(+) = UDP-N-acetyl-alpha-D-glucosamine + diphosphate. Its pathway is nucleotide-sugar biosynthesis; UDP-N-acetyl-alpha-D-glucosamine biosynthesis; N-acetyl-alpha-D-glucosamine 1-phosphate from alpha-D-glucosamine 6-phosphate (route II): step 2/2. It functions in the pathway nucleotide-sugar biosynthesis; UDP-N-acetyl-alpha-D-glucosamine biosynthesis; UDP-N-acetyl-alpha-D-glucosamine from N-acetyl-alpha-D-glucosamine 1-phosphate: step 1/1. It participates in bacterial outer membrane biogenesis; LPS lipid A biosynthesis. Its function is as follows. Catalyzes the last two sequential reactions in the de novo biosynthetic pathway for UDP-N-acetylglucosamine (UDP-GlcNAc). The C-terminal domain catalyzes the transfer of acetyl group from acetyl coenzyme A to glucosamine-1-phosphate (GlcN-1-P) to produce N-acetylglucosamine-1-phosphate (GlcNAc-1-P), which is converted into UDP-GlcNAc by the transfer of uridine 5-monophosphate (from uridine 5-triphosphate), a reaction catalyzed by the N-terminal domain. The polypeptide is Bifunctional protein GlmU (Escherichia coli O6:K15:H31 (strain 536 / UPEC)).